The sequence spans 169 residues: Cell division inhibitor SulA (169 aa).

Over residues 1-16 the composition is skewed to polar residues; that stretch reads MFTSAHANRSPLTSAS. Residues 1-20 form a disordered region; that stretch reads MFTSAHANRSPLTSASVRRP. The interval 106 to 112 is ftsZ binding; it reads ALRTGNY. The segment at 162–169 is lon protease binding; sequence KIHSNLYH.

The protein belongs to the SulA family. Interacts with FtsZ. Is rapidly cleaved and degraded by the Lon protease once DNA damage is repaired.

In terms of biological role, component of the SOS system and an inhibitor of cell division. Accumulation of SulA causes rapid cessation of cell division and the appearance of long, non-septate filaments. In the presence of GTP, binds a polymerization-competent form of FtsZ in a 1:1 ratio, thus inhibiting FtsZ polymerization and therefore preventing it from participating in the assembly of the Z ring. This mechanism prevents the premature segregation of damaged DNA to daughter cells during cell division. This is Cell division inhibitor SulA from Klebsiella aerogenes (Enterobacter aerogenes).